The following is a 421-amino-acid chain: Ethanolamine-phosphate cytidylyltransferase (421 aa).

A helical transmembrane segment spans residues 8-28 (IVGSCIVGGAAFAVGASFLHL). Residues 203–227 (SRSSLQRQFSHGHSSPKFEDGASSA) form a disordered region. The span at 204 to 215 (RSSLQRQFSHGH) shows a compositional bias: polar residues. CTP-binding positions include 262–263 (AF), 270–273 (HVEI), R298, 346–349 (HGTV), and 377–381 (SPLDI). A disordered region spans residues 402 to 421 (AKKEASEKKYYEQKSFVSGD). Residues 403–413 (KKEASEKKYYE) show a composition bias toward basic and acidic residues. S416 is modified (phosphoserine).

Belongs to the cytidylyltransferase family. As to expression, expressed in root tip, lateral root primordia, leaves, shoot apex, stem vascular bundles, pollen and embryos.

Its subcellular location is the mitochondrion outer membrane. It carries out the reaction phosphoethanolamine + CTP + H(+) = CDP-ethanolamine + diphosphate. It functions in the pathway phospholipid metabolism; phosphatidylethanolamine biosynthesis; phosphatidylethanolamine from ethanolamine: step 2/3. Plays an important role in the biosynthesis of the phospholipid phosphatidylethanolamine. Catalyzes the formation of CDP-ethanolamine. Essential for early embryonic development. This chain is Ethanolamine-phosphate cytidylyltransferase, found in Arabidopsis thaliana (Mouse-ear cress).